The chain runs to 101 residues: NAD(P)H-quinone oxidoreductase subunit 4L, chloroplastic (101 aa).

Transmembrane regions (helical) follow at residues 2–22, 32–52, and 61–81; these read MLEY…YGLI, MCLE…SDLF, and IFSI…PAIV.

It belongs to the complex I subunit 4L family. In terms of assembly, NDH is composed of at least 16 different subunits, 5 of which are encoded in the nucleus.

It is found in the plastid. Its subcellular location is the chloroplast thylakoid membrane. It catalyses the reaction a plastoquinone + NADH + (n+1) H(+)(in) = a plastoquinol + NAD(+) + n H(+)(out). The catalysed reaction is a plastoquinone + NADPH + (n+1) H(+)(in) = a plastoquinol + NADP(+) + n H(+)(out). Its function is as follows. NDH shuttles electrons from NAD(P)H:plastoquinone, via FMN and iron-sulfur (Fe-S) centers, to quinones in the photosynthetic chain and possibly in a chloroplast respiratory chain. The immediate electron acceptor for the enzyme in this species is believed to be plastoquinone. Couples the redox reaction to proton translocation, and thus conserves the redox energy in a proton gradient. The polypeptide is NAD(P)H-quinone oxidoreductase subunit 4L, chloroplastic (Acorus calamus var. americanus (American sweet flag)).